Consider the following 36-residue polypeptide: Amanexitide proprotein 2 (36 aa).

Positions 1 to 10 are excised as a propeptide; it reads MSDINATRLP. The segment at residues 11–19 is a cross-link (cyclopeptide (Val-Pro)); it reads VFSLPVFFP. The propeptide occupies 20–36; it reads FVSDDIQAVLTRGESLC.

This sequence belongs to the MSDIN fungal toxin family. Processed by the macrocyclase-peptidase enzyme POPB to yield a toxic cyclic nonapeptide. POPB first removes 10 residues from the N-terminus. Conformational trapping of the remaining peptide forces the enzyme to release this intermediate rather than proceed to macrocyclization. The enzyme rebinds the remaining peptide in a different conformation and catalyzes macrocyclization of the N-terminal 9 residues. Expressed in basidiocarps.

Its function is as follows. Cyclic nonapeptide that belongs to the MSDIN-like toxin family responsible for a large number of food poisoning cases and deaths. The polypeptide is Amanexitide proprotein 2 (Amanita exitialis (Guangzhou destroying angel)).